We begin with the raw amino-acid sequence, 104 residues long: Pole-localizer protein TmaR (104 aa).

2 coiled-coil regions span residues 7–34 and 76–96; these read IVNQ…NRKR and SAEI…LTEE.

The protein belongs to the pole-localizer TmaR family.

It localises to the cytoplasm. Functionally, pole-localizer protein involved in the regulation of several cellular processes. In Vibrio campbellii (strain ATCC BAA-1116), this protein is Pole-localizer protein TmaR.